A 67-amino-acid polypeptide reads, in one-letter code: Pepsin B (67 aa).

A propeptide spans 1-43 (MERIILRKGKSIREAMEEQGVLEKFLKNRPKIDPAAKYHFNND) (activation peptide).

Belongs to the peptidase A1 family.

The protein resides in the secreted. The enzyme catalyses Degradation of gelatin, little activity on hemoglobin. Specificity on B chain of insulin more restricted than that of pepsin A. Does not cleave 1-Phe-|-Val-2, 4-Gln-|-His-5 or 23-Gly-|-Phe-24.. The chain is Pepsin B (PGB) from Sus scrofa (Pig).